Reading from the N-terminus, the 748-residue chain is Phosphoribosylformylglycinamidine synthase subunit PurL (748 aa).

The active site involves His-47. 2 residues coordinate ATP: Tyr-50 and Lys-90. Residue Glu-92 participates in Mg(2+) binding. Substrate-binding positions include Ser-93–His-96 and Arg-115. Catalysis depends on His-94, which acts as the Proton acceptor. A Mg(2+)-binding site is contributed by Asp-116. Residue Gln-240 coordinates substrate. Residue Asp-268 coordinates Mg(2+). Residue Glu-312 to Gln-314 coordinates substrate. ATP contacts are provided by Asn-500 and Gly-537. Asn-538 is a binding site for Mg(2+). Ser-540 is a substrate binding site.

It belongs to the FGAMS family. Monomer. Part of the FGAM synthase complex composed of 1 PurL, 1 PurQ and 2 PurS subunits.

The protein localises to the cytoplasm. It catalyses the reaction N(2)-formyl-N(1)-(5-phospho-beta-D-ribosyl)glycinamide + L-glutamine + ATP + H2O = 2-formamido-N(1)-(5-O-phospho-beta-D-ribosyl)acetamidine + L-glutamate + ADP + phosphate + H(+). Its pathway is purine metabolism; IMP biosynthesis via de novo pathway; 5-amino-1-(5-phospho-D-ribosyl)imidazole from N(2)-formyl-N(1)-(5-phospho-D-ribosyl)glycinamide: step 1/2. Functionally, part of the phosphoribosylformylglycinamidine synthase complex involved in the purines biosynthetic pathway. Catalyzes the ATP-dependent conversion of formylglycinamide ribonucleotide (FGAR) and glutamine to yield formylglycinamidine ribonucleotide (FGAM) and glutamate. The FGAM synthase complex is composed of three subunits. PurQ produces an ammonia molecule by converting glutamine to glutamate. PurL transfers the ammonia molecule to FGAR to form FGAM in an ATP-dependent manner. PurS interacts with PurQ and PurL and is thought to assist in the transfer of the ammonia molecule from PurQ to PurL. The chain is Phosphoribosylformylglycinamidine synthase subunit PurL from Leptospira biflexa serovar Patoc (strain Patoc 1 / Ames).